We begin with the raw amino-acid sequence, 967 residues long: uncharacterized protein (967 aa).

2 disordered regions span residues 1–23 and 41–72; these read MQNA…FHDR and FTMH…DPRT. Residues 14–23 are compositionally biased toward basic and acidic residues; the sequence is KGRDVNFHDR. A compositionally biased stretch (polar residues) spans 60–72; the sequence is RLSNYSSAVDPRT. Ser-86 is subject to Phosphoserine. Disordered regions lie at residues 135–259, 271–296, 380–399, 437–464, and 499–544; these read AVSE…QHLP, SVSR…SPPE, DSTT…APHK, HSYG…FVAD, and GTRF…KSLS. The span at 162–187 shows a compositional bias: polar residues; the sequence is ESSTSNNLETGNSTNTALHNVSSPLE. The segment covering 205 to 218 has biased composition (basic and acidic residues); it reads HDLDEVISEKDTSL. A compositionally biased stretch (basic residues) spans 221 to 234; that stretch reads RSSRGRSSAPKRRK. Low complexity predominate over residues 278 to 294; sequence SPASTPRSSVSSVSSSP. Residues 382-394 are compositionally biased toward polar residues; sequence TTEYVNTESSSKT. Positions 499–508 are enriched in basic residues; sequence GTRFHSRSSH. Ser-585 is modified (phosphoserine). Disordered stretches follow at residues 594-665 and 681-708; these read ESNE…SVND and DHRI…ESQH. Positions 608–622 are enriched in basic and acidic residues; that stretch reads YDSRESTGHTIKELR. Low complexity predominate over residues 686–704; that stretch reads ASDNQNNNNNDANALAENS. 728 to 736 provides a ligand contact to substrate; sequence PCVLDVKMG.

This sequence belongs to the inositol phosphokinase (IPK) family.

It is found in the cytoplasm. This is an uncharacterized protein from Schizosaccharomyces pombe (strain 972 / ATCC 24843) (Fission yeast).